The following is a 183-amino-acid chain: Large ribosomal subunit protein uL6 (183 aa).

The protein belongs to the universal ribosomal protein uL6 family. Part of the 50S ribosomal subunit.

Its function is as follows. This protein binds to the 23S rRNA, and is important in its secondary structure. It is located near the subunit interface in the base of the L7/L12 stalk, and near the tRNA binding site of the peptidyltransferase center. The chain is Large ribosomal subunit protein uL6 from Methanococcus aeolicus (strain ATCC BAA-1280 / DSM 17508 / OCM 812 / Nankai-3).